The primary structure comprises 957 residues: Glycine dehydrogenase (decarboxylating) (957 aa).

At Lys708 the chain carries N6-(pyridoxal phosphate)lysine.

It belongs to the GcvP family. As to quaternary structure, the glycine cleavage system is composed of four proteins: P, T, L and H. Requires pyridoxal 5'-phosphate as cofactor.

The enzyme catalyses N(6)-[(R)-lipoyl]-L-lysyl-[glycine-cleavage complex H protein] + glycine + H(+) = N(6)-[(R)-S(8)-aminomethyldihydrolipoyl]-L-lysyl-[glycine-cleavage complex H protein] + CO2. The glycine cleavage system catalyzes the degradation of glycine. The P protein binds the alpha-amino group of glycine through its pyridoxal phosphate cofactor; CO(2) is released and the remaining methylamine moiety is then transferred to the lipoamide cofactor of the H protein. This chain is Glycine dehydrogenase (decarboxylating), found in Pectobacterium atrosepticum (strain SCRI 1043 / ATCC BAA-672) (Erwinia carotovora subsp. atroseptica).